The chain runs to 207 residues: Dephospho-CoA kinase (207 aa).

Residues 4-204 form the DPCK domain; it reads VVGLTGGIGS…HLYLQFAEIF (201 aa). ATP is bound at residue 12–17; sequence GSGKST.

This sequence belongs to the CoaE family.

Its subcellular location is the cytoplasm. The enzyme catalyses 3'-dephospho-CoA + ATP = ADP + CoA + H(+). It functions in the pathway cofactor biosynthesis; coenzyme A biosynthesis; CoA from (R)-pantothenate: step 5/5. Catalyzes the phosphorylation of the 3'-hydroxyl group of dephosphocoenzyme A to form coenzyme A. In Aggregatibacter actinomycetemcomitans (Actinobacillus actinomycetemcomitans), this protein is Dephospho-CoA kinase.